Here is a 516-residue protein sequence, read N- to C-terminus: L-amino acid oxidase Lm29 (516 aa).

The N-terminal stretch at 1 to 18 (MNVFFMFSLLFLAALGSC) is a signal peptide. A disulfide bridge connects residues C28 and C191. FAD is bound by residues 61-62 (MS), 81-82 (EA), R89, and 105-108 (GPMR). Position 108 (R108) interacts with substrate. A glycan (N-linked (GlcNAc...) asparagine) is linked at N190. Residue H241 coordinates substrate. An FAD-binding site is contributed by V279. Cysteines 349 and 430 form a disulfide. N379 is a glycosylation site (N-linked (GlcNAc...) asparagine). Y390 provides a ligand contact to substrate. FAD-binding positions include E475 and 482 to 487 (GWIDST). Substrate is bound at residue 482 to 483 (GW).

This sequence belongs to the flavin monoamine oxidase family. FIG1 subfamily. In terms of assembly, homodimer; non-covalently linked. Requires FAD as cofactor. In terms of tissue distribution, expressed by the venom gland.

The protein localises to the secreted. It carries out the reaction an L-alpha-amino acid + O2 + H2O = a 2-oxocarboxylate + H2O2 + NH4(+). The catalysed reaction is L-leucine + O2 + H2O = 4-methyl-2-oxopentanoate + H2O2 + NH4(+). It catalyses the reaction L-phenylalanine + O2 + H2O = 3-phenylpyruvate + H2O2 + NH4(+). The enzyme catalyses L-tryptophan + O2 + H2O = indole-3-pyruvate + H2O2 + NH4(+). It carries out the reaction L-methionine + O2 + H2O = 4-methylsulfanyl-2-oxobutanoate + H2O2 + NH4(+). The catalysed reaction is L-isoleucine + O2 + H2O = (S)-3-methyl-2-oxopentanoate + H2O2 + NH4(+). It catalyses the reaction L-tyrosine + O2 + H2O = 3-(4-hydroxyphenyl)pyruvate + H2O2 + NH4(+). Functionally, catalyzes an oxidative deamination of predominantly hydrophobic and aromatic L-amino acids, thus producing hydrogen peroxide that may contribute to the diverse toxic effects of this enzyme. Is highly active on L-Met=L-Leu&gt;&gt;L-Phe&gt;L-Trp&gt;L-Tyr&gt;L-Ile, and weakly or not active on L-His, L-Arg, L-Val, L-Gln, L-Thr, L-Lys, and L-Ser. Exhibits a low myotoxicity (a mild myonecrosis is observed after injection in mice quadriceps muscle). In vitro, is cytotoxic to a lot of human cell lines, including AGS (IC(50)=22.7 ug/ml), MCF-7 (IC(50)=1.4 ug/ml), HL-60, HeLa and Jurkat cells, as well as to the parasite Leishmania brasiliensis (IC(50)=2.22 ug/ml). This cytotoxicity is dependent on the production of hydrogen peroxyde, since it is inhibited by catalase, a hydrogen peroxyde scavenger. The polypeptide is L-amino acid oxidase Lm29 (Lachesis muta (South American bushmaster)).